The following is a 479-amino-acid chain: Ribulose bisphosphate carboxylase large chain (479 aa).

A propeptide spanning residues 1-2 is cleaved from the precursor; that stretch reads MS. Substrate-binding residues include N123 and T173. Residue K175 is the Proton acceptor of the active site. Position 177 (K177) interacts with substrate. Residues K201, D203, and E204 each contribute to the Mg(2+) site. Position 201 is an N6-carboxylysine (K201). S208 carries the post-translational modification Phosphoserine. The active-site Proton acceptor is H294. Positions 295 and 327 each coordinate substrate. A Phosphothreonine modification is found at T330. S379 is a binding site for substrate.

It belongs to the RuBisCO large chain family. Type I subfamily. In terms of assembly, heterohexadecamer of 8 large chains and 8 small chains; disulfide-linked. The disulfide link is formed within the large subunit homodimers. The cofactor is Mg(2+). Post-translationally, the disulfide bond which can form in the large chain dimeric partners within the hexadecamer appears to be associated with oxidative stress and protein turnover.

Its subcellular location is the plastid. The protein resides in the chloroplast. It carries out the reaction 2 (2R)-3-phosphoglycerate + 2 H(+) = D-ribulose 1,5-bisphosphate + CO2 + H2O. The enzyme catalyses D-ribulose 1,5-bisphosphate + O2 = 2-phosphoglycolate + (2R)-3-phosphoglycerate + 2 H(+). In terms of biological role, ruBisCO catalyzes two reactions: the carboxylation of D-ribulose 1,5-bisphosphate, the primary event in carbon dioxide fixation, as well as the oxidative fragmentation of the pentose substrate in the photorespiration process. Both reactions occur simultaneously and in competition at the same active site. This Crucihimalaya wallichii (Rock-cress) protein is Ribulose bisphosphate carboxylase large chain.